Reading from the N-terminus, the 206-residue chain is Small ribosomal subunit protein uS4 (206 aa).

Residues 96 to 156 enclose the S4 RNA-binding domain; that stretch reads TRLDNVVYRM…EKSRTQARIK (61 aa).

The protein belongs to the universal ribosomal protein uS4 family. In terms of assembly, part of the 30S ribosomal subunit. Contacts protein S5. The interaction surface between S4 and S5 is involved in control of translational fidelity.

Its function is as follows. One of the primary rRNA binding proteins, it binds directly to 16S rRNA where it nucleates assembly of the body of the 30S subunit. In terms of biological role, with S5 and S12 plays an important role in translational accuracy. This Shewanella amazonensis (strain ATCC BAA-1098 / SB2B) protein is Small ribosomal subunit protein uS4.